The primary structure comprises 331 residues: Phosphatidylinositol transfer protein 4 (331 aa).

Belongs to the PtdIns transfer protein family. PI transfer class IIA subfamily.

In terms of biological role, catalyzes the transfer of PtdIns and phosphatidylcholine between membranes. This Dictyostelium discoideum (Social amoeba) protein is Phosphatidylinositol transfer protein 4 (pitD).